A 538-amino-acid chain; its full sequence is ATP synthase subunit alpha, mitochondrial (538 aa).

ATP is bound at residue 197 to 204; it reads GDRQTGKT. An essential and sufficient for enterobactin binding region spans residues 228 to 248; sequence FCIYVAVGQKRSTVAQIVKRL.

Belongs to the ATPase alpha/beta chains family. As to quaternary structure, subunit of the F-type ATPase which has 2 components, CF(1) - the catalytic core - and CF(0) - the membrane proton channel. As to expression, ubiquitous (at protein level).

The protein resides in the mitochondrion. It is found in the mitochondrion inner membrane. Functionally, mitochondrial membrane ATP synthase (F(1)F(0) ATP synthase or Complex V) produces ATP from ADP in the presence of a proton gradient across the membrane which is generated by electron transport complexes of the respiratory chain. F-type ATPases consist of two structural domains, F(1) - containing the extramembraneous catalytic core, and F(0) - containing the membrane proton channel, linked together by a central stalk and a peripheral stalk. During catalysis, ATP synthesis in the catalytic domain of F(1) is coupled via a rotary mechanism of the central stalk subunits to proton translocation. Subunits alpha and beta form the catalytic core in F(1). Rotation of the central stalk against the surrounding subunits leads to hydrolysis of ATP in three separate catalytic sites on the beta subunits. Subunit alpha does not bear the catalytic high-affinity ATP-binding sites. Binds the bacterial siderophore enterobactin and is required for the assimilation of enterobactin-bound iron from non-pathogenic bacteria. Promotes mitochondrial accumulation of enterobactin-derived iron ions. The chain is ATP synthase subunit alpha, mitochondrial from Caenorhabditis elegans.